The chain runs to 332 residues: Probable thc operon regulatory protein (332 aa).

Residues arginine 227–threonine 328 enclose the HTH araC/xylS-type domain. 2 DNA-binding regions (H-T-H motif) span residues alanine 244–leucine 265 and valine 295–phenylalanine 318.

Its function is as follows. Probably involved in the positive regulation of the thc operon for the degradation of the thiocarbamate herbicide EPTC. The sequence is that of Probable thc operon regulatory protein (thcR) from Rhodococcus erythropolis (Arthrobacter picolinophilus).